Here is a 156-residue protein sequence, read N- to C-terminus: Small ribosomal subunit protein uS7 (156 aa).

Belongs to the universal ribosomal protein uS7 family. Part of the 30S ribosomal subunit. Contacts proteins S9 and S11.

One of the primary rRNA binding proteins, it binds directly to 16S rRNA where it nucleates assembly of the head domain of the 30S subunit. Is located at the subunit interface close to the decoding center, probably blocks exit of the E-site tRNA. The polypeptide is Small ribosomal subunit protein uS7 (Shigella dysenteriae serotype 1 (strain Sd197)).